Here is a 122-residue protein sequence, read N- to C-terminus: Large ribosomal subunit protein uL14 (122 aa).

It belongs to the universal ribosomal protein uL14 family. As to quaternary structure, part of the 50S ribosomal subunit. Forms a cluster with proteins L3 and L19. In the 70S ribosome, L14 and L19 interact and together make contacts with the 16S rRNA in bridges B5 and B8.

Binds to 23S rRNA. Forms part of two intersubunit bridges in the 70S ribosome. The sequence is that of Large ribosomal subunit protein uL14 from Aliarcobacter butzleri (strain RM4018) (Arcobacter butzleri).